Consider the following 104-residue polypeptide: AVIToxin-VAR2 (104 aa).

Positions 1-19 (MRSLLCAPLLLLLLSAGES) are cleaved as a signal peptide. Disulfide bonds link Cys-26-Cys-38, Cys-32-Cys-50, Cys-37-Cys-78, Cys-60-Cys-86, and Cys-80-Cys-96.

The protein belongs to the AVIT (prokineticin) family. As to expression, expressed by the venom gland.

The protein localises to the secreted. In terms of biological role, potent agonist for both PKR1/PROKR1 and PKR2/PROKR2. Potently contracts gastrointestinal (GI) smooth muscle. This Varanus varius (Lace monitor lizard) protein is AVIToxin-VAR2.